Here is a 306-residue protein sequence, read N- to C-terminus: D-alanine--D-alanine ligase B (306 aa).

Active-site residues include E15 and S150. In terms of domain architecture, ATP-grasp spans K101–E303. Position 134–189 (I134–T189) interacts with ATP. Mg(2+) is bound by residues D257, E270, and N272. S281 is a catalytic residue.

The protein belongs to the D-alanine--D-alanine ligase family. As to quaternary structure, monomer. Requires Mg(2+) as cofactor. Mn(2+) serves as cofactor.

It is found in the cytoplasm. It carries out the reaction 2 D-alanine + ATP = D-alanyl-D-alanine + ADP + phosphate + H(+). It participates in cell wall biogenesis; peptidoglycan biosynthesis. Cell wall formation. The protein is D-alanine--D-alanine ligase B (ddlB) of Escherichia coli (strain K12).